The chain runs to 162 residues: MNDRELDLTEAQKAIKAKYPAINKKYEYLDHTADVQLHSWGDTLEEAFEQCAMAMFGYMTDTETVEPIDTIEIESEGDDLESLLFHFLDDWLFKFSADAFFVPREVKVLQLDRMRFTIRSIGWGEEFNLAKHPQGTEVKAITYSAMQICDKEKPEIFAIIDI.

Positions 34, 161, and 162 each coordinate Ca(2+).

It belongs to the archease family. As to quaternary structure, component of the tRNA-splicing ligase complex.

Its function is as follows. Component of the tRNA-splicing ligase complex required to facilitate the enzymatic turnover of catalytic subunit RTCB. Together with ddx1, acts by facilitating the guanylylation of RTCB, a key intermediate step in tRNA ligation. The sequence is that of Protein archease from Ictalurus punctatus (Channel catfish).